The sequence spans 130 residues: Protein ApaG (130 aa).

Residues 3–127 (RAVTRRIEVT…FSLDSPEGKR (125 aa)) form the ApaG domain.

The sequence is that of Protein ApaG from Rhodopseudomonas palustris (strain ATCC BAA-98 / CGA009).